The chain runs to 333 residues: Taste receptor type 2 member 38 (333 aa).

Topologically, residues Met1–Thr17 are extracellular. A helical membrane pass occupies residues Phe18–Leu38. Topologically, residues Val39 to Cys55 are cytoplasmic. A helical transmembrane segment spans residues Val56–Ile76. Over Gln77–Ala94 the chain is Extracellular. Residues Ile95 to Leu115 traverse the membrane as a helical segment. The Cytoplasmic portion of the chain corresponds to Leu116–Gln142. Residues Met143 to Phe163 form a helical membrane-spanning segment. Over Ser164–Asn190 the chain is Extracellular. The N-linked (GlcNAc...) asparagine glycan is linked to Asn178. A helical membrane pass occupies residues Leu191–Val211. Over Ser212–Ser251 the chain is Cytoplasmic. Residues Phe252–Leu272 form a helical membrane-spanning segment. The Extracellular segment spans residues Trp273–Lys276. A helical transmembrane segment spans residues Ile277 to Leu297. Residues Ile298–Cys333 are Cytoplasmic-facing.

This sequence belongs to the G-protein coupled receptor T2R family.

Its subcellular location is the membrane. Receptor that may play a role in the perception of bitterness and is gustducin-linked. May play a role in sensing the chemical composition of the gastrointestinal content. The activity of this receptor may stimulate alpha gustducin, mediate PLC-beta-2 activation and lead to the gating of TRPM5. The protein is Taste receptor type 2 member 38 (TAS2R38) of Pan troglodytes (Chimpanzee).